The following is a 768-amino-acid chain: MKMAPQNADPESMQVQELSVPLPDPQKAGGAEAENCETISEGSIDRIPMRLWVMHGAVMFGREFCYAMETALVTPILLQIGLPEQYYSLTWFLSPILGLIFTPLIGSASDRCTLSWGRRRPFILALCVGVLFGVALFLNGSAIGLALGDVPNRQPIGIVLTVLGVVVLDFSADATEGPIRAYLLDVVDSEEQDMALNIHAFSAGLGGAIGYVLGGLDWTQTFLGSWFRTQNQVLFFFAAIIFTVSVALHLFSIDEEQYSPQQERSAEEPGALDGGEPHGVPAFPDEVQSEHELALDYPDVDIMRSKSDSALHVPDTALDLEPELLFLHDIEPSIFHDASYPATPRSTSQELAKTKLPRLATFLKEAAKEDETLLDNHLNEAKVPNGSGSPTKDALGGYTRVDTKPSATSSSMRRRRHAFRRQASSTFSYYGKLGSHCYRYRRANAVVLIKPSRSMSDLYDMQKRQRQHRHRNQSGATTSSGDTESEEGEGETTVRLLWLSMLKMPRELMRLCLCHLLTWFSVIAEAVFYTDFMGQVIFEGDPKAPSNSTAWQAYNAGVKMGCWGLVIYAATGAICSALLQKYLDNYDLSVRVIYVLGTLGFSVGTAVMAMFPNVYVAMVTISTMGIVSMSISYCPYALLGQYHDIKQYIHHSPGNSKRGFGIDCAILSCQVYISQILVASALGGVVDAVGTVRVIPMVASVGSFLGFLTATFLVIYPNVSEEAKEEQKGLSSPLAGEGRAGGNSEKPTVLKLTRKEGLQGPVETESVV.

The tract at residues 1 to 32 (MKMAPQNADPESMQVQELSVPLPDPQKAGGAE) is disordered. The next 6 helical transmembrane spans lie at 63–83 (EFCY…IGLP), 86–106 (YYSL…PLIG), 123–143 (ILAL…GSAI), 155–175 (PIGI…ADAT), 196–216 (LNIH…LGGL), and 233–253 (VLFF…LFSI). Disordered stretches follow at residues 259–284 (SPQQ…PAFP) and 379–419 (NEAK…RHAF). Phosphoserine occurs at positions 424 and 454. The disordered stretch occupies residues 460–489 (DMQKRQRQHRHRNQSGATTSSGDTESEEGE). Positions 473–482 (QSGATTSSGD) are enriched in low complexity. Serine 485 is subject to Phosphoserine. The next 6 helical transmembrane spans lie at 518–538 (TWFS…QVIF), 560–580 (MGCW…ALLQ), 592–612 (VIYV…AMFP), 614–634 (VYVA…ISYC), 666–686 (ILSC…GGVV), and 695–715 (IPMV…FLVI). The segment at 726–768 (EQKGLSSPLAGEGRAGGNSEKPTVLKLTRKEGLQGPVETESVV) is disordered. Serine 732 carries the phosphoserine modification.

This sequence belongs to the glycoside-pentoside-hexuronide (GPH) cation symporter transporter (TC 2.A.2) family.

The protein localises to the membrane. It catalyses the reaction sucrose(out) + H(+)(out) = sucrose(in) + H(+)(in). In terms of biological role, proton-associated sucrose transporter. May be able to transport also glucose and fructose. The chain is Solute carrier family 45 member 4 from Homo sapiens (Human).